A 150-amino-acid chain; its full sequence is Large ribosomal subunit protein uL15 (150 aa).

It belongs to the universal ribosomal protein uL15 family. In terms of assembly, part of the 50S ribosomal subunit.

In terms of biological role, binds to the 23S rRNA. This Rickettsia prowazekii (strain Madrid E) protein is Large ribosomal subunit protein uL15.